Consider the following 544-residue polypeptide: Lipid II flippase MurJ (544 aa).

14 consecutive transmembrane segments (helical) span residues 21 to 41 (ILGMVYLIPFSIMVGATGGAL), 49 to 69 (YTLFLNIATMGFPAAVSKFVS), 90 to 110 (VMLVTGMIAFFILYLSAPMFA), 127 to 147 (VVYVIRMVSLALLVVPIMSLV), 169 to 189 (IVRIIFLLSATFLILKVFNGG), 191 to 211 (VIAVGYATFAALIGAFGGLVV), 241 to 261 (MFFELFSYAAPYVFVGLAIPL), 297 to 317 (LVMIPVSLATAFGLTLIPTIT), 338 to 358 (TILFLIIPAVVGISLLSGPTY), 375 to 395 (ILLWYSPVAILFSLFTVNAAI), 404 to 424 (FAVVSLVIGVVIKLVLNVPLI), 431 to 451 (GAILATALGYIASLLYGFIMI), 471 to 491 (VLSAIMGIAVKIVQWVLGFFI), and 500 to 520 (AAIVVVIAAAVGGAVYLYCGY).

The protein belongs to the polysaccharide synthase family.

It is found in the cell membrane. It participates in cell wall biogenesis; peptidoglycan biosynthesis. Functionally, involved in peptidoglycan biosynthesis. Transports lipid-linked peptidoglycan precursors from the inner to the outer leaflet of the cytoplasmic membrane. Not essential for growth. In Bacillus subtilis (strain 168), this protein is Lipid II flippase MurJ.